Reading from the N-terminus, the 286-residue chain is Shikimate dehydrogenase (NADP(+)) (286 aa).

Residues 19 to 21 (SLS) and Thr-66 contribute to the shikimate site. Lys-70 acts as the Proton acceptor in catalysis. Shikimate contacts are provided by Asn-91 and Asp-107. NADP(+) contacts are provided by residues 129 to 133 (GSGGA) and Leu-229. A shikimate-binding site is contributed by Tyr-231. Position 252 (Gly-252) interacts with NADP(+).

This sequence belongs to the shikimate dehydrogenase family. Homodimer.

The catalysed reaction is shikimate + NADP(+) = 3-dehydroshikimate + NADPH + H(+). The protein operates within metabolic intermediate biosynthesis; chorismate biosynthesis; chorismate from D-erythrose 4-phosphate and phosphoenolpyruvate: step 4/7. Involved in the biosynthesis of the chorismate, which leads to the biosynthesis of aromatic amino acids. Catalyzes the reversible NADPH linked reduction of 3-dehydroshikimate (DHSA) to yield shikimate (SA). The chain is Shikimate dehydrogenase (NADP(+)) from Prochlorococcus marinus (strain AS9601).